Consider the following 237-residue polypeptide: Protein YIPF4 (237 aa).

Residues 1 to 106 (MQFSPTNGDF…FNRQVVRDNP (106 aa)) are Cytoplasmic-facing. Residues 107 to 127 (DFWGPLAVVLLFSMISIYGQF) traverse the membrane as a helical segment. The Lumenal portion of the chain corresponds to 128 to 131 (RVVS). Residues 132–152 (WIITIWIFGSLTIFLLARVLG) form a helical membrane-spanning segment. Over 153–160 (GEVSYGQV) the chain is Cytoplasmic. A helical membrane pass occupies residues 161-181 (LGVIGYSLLPLIVIAPLLLVI). Topologically, residues 182-188 (GGFEVVS) are lumenal. Residues 189-209 (TLIKLFGVFWAAYSAASLLVG) form a helical membrane-spanning segment. The Cytoplasmic segment spans residues 210-216 (DEFKTKK). The helical transmembrane segment at 217–237 (PLLIYPIFLLYIYFLSLYTGV) threads the bilayer.

This sequence belongs to the YIP1 family.

It localises to the golgi apparatus. It is found in the cis-Golgi network membrane. In terms of biological role, involved in the maintenance of the Golgi structure. The sequence is that of Protein YIPF4 (yipf4) from Danio rerio (Zebrafish).